A 107-amino-acid polypeptide reads, in one-letter code: C-X-C motif chemokine 3 (107 aa).

An N-terminal signal peptide occupies residues 1 to 34; the sequence is MAHATLSAAPSNPRLLRVALLLLLLVAASRRAAG. Intrachain disulfides connect cysteine 43–cysteine 69 and cysteine 45–cysteine 85.

It belongs to the intercrine alpha (chemokine CxC) family. Post-translationally, N-terminal processed form GRO-gamma(5-73) is produced by proteolytic cleavage after secretion from peripheral blood monocytes.

Its subcellular location is the secreted. In terms of biological role, ligand for CXCR2. Has chemotactic activity for neutrophils. May play a role in inflammation and exert its effects on endothelial cells in an autocrine fashion. In vitro, the processed form GRO-gamma(5-73) shows a fivefold higher chemotactic activity for neutrophilic granulocytes. The sequence is that of C-X-C motif chemokine 3 (CXCL3) from Homo sapiens (Human).